Here is a 141-residue protein sequence, read N- to C-terminus: Large ribosomal subunit protein uL11 (141 aa).

The protein belongs to the universal ribosomal protein uL11 family. In terms of assembly, part of the ribosomal stalk of the 50S ribosomal subunit. Interacts with L10 and the large rRNA to form the base of the stalk. L10 forms an elongated spine to which L12 dimers bind in a sequential fashion forming a multimeric L10(L12)X complex. One or more lysine residues are methylated.

Its function is as follows. Forms part of the ribosomal stalk which helps the ribosome interact with GTP-bound translation factors. The protein is Large ribosomal subunit protein uL11 of Coprothermobacter proteolyticus (strain ATCC 35245 / DSM 5265 / OCM 4 / BT).